The following is a 339-amino-acid chain: Replication factor C subunit 2 (339 aa).

48–55 (YGPPGTGK) serves as a coordination point for ATP.

Belongs to the activator 1 small subunits family. Heterotetramer of subunits RFC2, RFC3, RFC4 and RFC5 that can form a complex with RFC1. In terms of tissue distribution, expressed in roots, leaves, shoot apical meristem (SAM), flag leaves and panicles.

It is found in the nucleus. Its function is as follows. May be involved in DNA replication and thus regulate cell proliferation. This is Replication factor C subunit 2 (RFC2) from Oryza sativa subsp. japonica (Rice).